Consider the following 424-residue polypeptide: UDP-N-acetylglucosamine 1-carboxyvinyltransferase (424 aa).

Residue lysine 22 to asparagine 23 coordinates phosphoenolpyruvate. Residue arginine 98 participates in UDP-N-acetyl-alpha-D-glucosamine binding. Cysteine 122 (proton donor) is an active-site residue. At cysteine 122 the chain carries 2-(S-cysteinyl)pyruvic acid O-phosphothioketal. Residues arginine 127–glutamine 131, aspartate 312, and isoleucine 334 each bind UDP-N-acetyl-alpha-D-glucosamine.

This sequence belongs to the EPSP synthase family. MurA subfamily.

The protein resides in the cytoplasm. The enzyme catalyses phosphoenolpyruvate + UDP-N-acetyl-alpha-D-glucosamine = UDP-N-acetyl-3-O-(1-carboxyvinyl)-alpha-D-glucosamine + phosphate. The protein operates within cell wall biogenesis; peptidoglycan biosynthesis. Cell wall formation. Adds enolpyruvyl to UDP-N-acetylglucosamine. This is UDP-N-acetylglucosamine 1-carboxyvinyltransferase from Xanthomonas oryzae pv. oryzae (strain MAFF 311018).